Here is a 596-residue protein sequence, read N- to C-terminus: Aspartate--tRNA(Asp/Asn) ligase (596 aa).

L-aspartate is bound at residue Glu175. The aspartate stretch occupies residues 199-202 (QQYK). L-aspartate is bound by residues Arg221 and His454. 221–223 (RDE) lines the ATP pocket. Glu488 contacts ATP. Residue Arg495 coordinates L-aspartate. 540–543 (GIDR) is a binding site for ATP.

The protein belongs to the class-II aminoacyl-tRNA synthetase family. Type 1 subfamily. In terms of assembly, homodimer.

The protein localises to the cytoplasm. It carries out the reaction tRNA(Asx) + L-aspartate + ATP = L-aspartyl-tRNA(Asx) + AMP + diphosphate. Functionally, aspartyl-tRNA synthetase with relaxed tRNA specificity since it is able to aspartylate not only its cognate tRNA(Asp) but also tRNA(Asn). Reaction proceeds in two steps: L-aspartate is first activated by ATP to form Asp-AMP and then transferred to the acceptor end of tRNA(Asp/Asn). The protein is Aspartate--tRNA(Asp/Asn) ligase of Mesorhizobium japonicum (strain LMG 29417 / CECT 9101 / MAFF 303099) (Mesorhizobium loti (strain MAFF 303099)).